The following is a 112-amino-acid chain: Cytochrome c type-1 (112 aa).

Residues Cys-20, Cys-23, His-24, and Met-85 each coordinate heme c.

In terms of processing, binds 1 heme c group covalently per subunit.

The protein resides in the mitochondrion intermembrane space. Electron carrier between complex III (ubiquinol-cytochrome c oxireductase) and complex IV (cytochrome c oxidase). The polypeptide is Cytochrome c type-1 (Ascaris suum (Pig roundworm)).